The primary structure comprises 70 residues: Large ribosomal subunit protein bL31c (70 aa).

The protein belongs to the bacterial ribosomal protein bL31 family. Type A subfamily. As to quaternary structure, part of the 50S ribosomal subunit.

It localises to the plastid. Its subcellular location is the chloroplast. Binds the 23S rRNA. The sequence is that of Large ribosomal subunit protein bL31c from Emiliania huxleyi (Coccolithophore).